A 651-amino-acid chain; its full sequence is MRLFIAEKPSLARAIADVLPKPHQRGDGFIKCGDNDVVTWCVGHLLEQAEPDAYDPKFKQWRLEHLPIIPEKWQLLPRKEVKKQLSVVEKLIHQADTLVNAGDPDREGQLLVDEVFSYANLSAEKRDKILRCLISDLNPSAVEKAVKKLQPNRNFIPLATSALARARADWLYGINMTRAYTIRGRQTGYDGVLSVGRVQTPVLGLIVRRDLEIEHFQPKDFFEVQAWVNPESKEEKTPEKSTALFSALWQPSKACEDYQDDDGRVLSKGLAEKVVKRITNQPAEVTEYKDVREKETAPLPYSLSALQIDAAKRFGMSAQAVLDTCQRLYETHRLITYPRSDCRYLPEEHFAERHNVLNAISTHCEAYQVLPNVILTEQRNRCWNDKKVEAHHAIIPTAKNRPVNLTQEERNIYSLIARQYLMQFCPDAEYRKSKITLNIAGGTFIAQARNLQTAGWKELLGKEDDTENQEPLLPIVKKGQILHCERGEVMSKKTQPPKPFTDATLLSAMTGIARFVQDKELKKILRETDGLGTEATRAGIIELLFKRGFLTKKGRNIHSTETGRILIQALPNIATQPDMTAHWESQLTDISQKQATYQQFMHNLNQILPDLVRFVDLNALRQLSRIKMIKSDRAKPKSAVKKSSKSNGETD.

Positions 1–134 (MRLFIAEKPS…KRDKILRCLI (134 aa)) constitute a Toprim domain. Mg(2+) is bound by residues E7, D103, and D105. In terms of domain architecture, Topo IA-type catalytic spans 155-612 (FIPLATSALA…NLNQILPDLV (458 aa)). Positions 194–199 (SVGRVQ) are interaction with DNA. The active-site O-(5'-phospho-DNA)-tyrosine intermediate is the Y337. The tract at residues 631 to 651 (SDRAKPKSAVKKSSKSNGETD) is disordered.

This sequence belongs to the type IA topoisomerase family. Mg(2+) serves as cofactor.

It catalyses the reaction ATP-independent breakage of single-stranded DNA, followed by passage and rejoining.. In terms of biological role, releases the supercoiling and torsional tension of DNA, which is introduced during the DNA replication and transcription, by transiently cleaving and rejoining one strand of the DNA duplex. Introduces a single-strand break via transesterification at a target site in duplex DNA. The scissile phosphodiester is attacked by the catalytic tyrosine of the enzyme, resulting in the formation of a DNA-(5'-phosphotyrosyl)-enzyme intermediate and the expulsion of a 3'-OH DNA strand. The free DNA strand then undergoes passage around the unbroken strand, thus removing DNA supercoils. Finally, in the religation step, the DNA 3'-OH attacks the covalent intermediate to expel the active-site tyrosine and restore the DNA phosphodiester backbone. The sequence is that of DNA topoisomerase 3 from Haemophilus influenzae (strain ATCC 51907 / DSM 11121 / KW20 / Rd).